Here is a 423-residue protein sequence, read N- to C-terminus: Probable WRKY transcription factor 58 (423 aa).

Disordered regions lie at residues 91–128, 142–171, and 215–284; these read SSAH…AVHG, RNHY…DGYN, and IYKG…GVST. 2 stretches are compositionally biased toward low complexity: residues 99–111 and 144–162; these read QPRQ…PQRP and HYNN…VVNV. Positions 161–225 form a DNA-binding region, WRKY 1; that stretch reads NVDKPADDGY…YKGQHDHERP (65 aa). Residues 259 to 271 are compositionally biased toward acidic residues; it reads DDDDDDDEDDEDL. The WRKY 2 DNA-binding region spans 300-365; sequence SEVDLLDDGY…YEGKHNHDVP (66 aa).

The protein resides in the nucleus. Its function is as follows. Transcription factor. Interacts specifically with the W box (5'-(T)TGAC[CT]-3'), a frequently occurring elicitor-responsive cis-acting element. The chain is Probable WRKY transcription factor 58 (WRKY58) from Arabidopsis thaliana (Mouse-ear cress).